The following is a 181-amino-acid chain: MKREMRQDRKAQPKAPINENISAREVRLIGVDGEQIGIVSIDEALRVAEEAKLDLVEISADAVPPVCRIMDYGKHLFEKKKQVAAAKKNQKQVQIKEIKFRPGTEEGDYQVKLRNLVRFLNDGDKAKVSLRFRGREMAHQELGMELLKRVENDLAEFGTVEQYPKLEGRQLMMVIAPKKRK.

The protein belongs to the IF-3 family. In terms of assembly, monomer.

Its subcellular location is the cytoplasm. IF-3 binds to the 30S ribosomal subunit and shifts the equilibrium between 70S ribosomes and their 50S and 30S subunits in favor of the free subunits, thus enhancing the availability of 30S subunits on which protein synthesis initiation begins. This chain is Translation initiation factor IF-3, found in Azotobacter vinelandii.